Reading from the N-terminus, the 446-residue chain is Putative diacyglycerol O-acyltransferase Rv3371 (446 aa).

H129 serves as the catalytic Proton acceptor. The interval 425 to 446 is disordered; it reads SRALPSAARRGRPSVPTARARH.

The protein belongs to the long-chain O-acyltransferase family.

It catalyses the reaction an acyl-CoA + a 1,2-diacyl-sn-glycerol = a triacyl-sn-glycerol + CoA. The enzyme catalyses di-(9Z)-octadecenoylglycerol + (9Z)-octadecenoyl-CoA = 1,2,3-tri-(9Z-octadecenoyl)-glycerol + CoA. It functions in the pathway glycerolipid metabolism; triacylglycerol biosynthesis. In terms of biological role, catalyzes the terminal and only committed step in triacylglycerol synthesis by using diacylglycerol and fatty acyl CoA as substrates. Required for storage lipid synthesis. Upon expression in E.coli functions weakly as a triacylglycerol synthase, making triacylglycerol (TG) from diolein and long-chain fatty acyl-CoA. Has no wax synthase activity to produce wax esters. The polypeptide is Putative diacyglycerol O-acyltransferase Rv3371 (Mycobacterium tuberculosis (strain ATCC 25618 / H37Rv)).